Consider the following 115-residue polypeptide: Large ribosomal subunit protein bL31B (115 aa).

The protein belongs to the bacterial ribosomal protein bL31 family. Type B subfamily. As to quaternary structure, part of the 50S ribosomal subunit.

The polypeptide is Large ribosomal subunit protein bL31B (Polynucleobacter asymbioticus (strain DSM 18221 / CIP 109841 / QLW-P1DMWA-1) (Polynucleobacter necessarius subsp. asymbioticus)).